The sequence spans 249 residues: Probable transcriptional regulatory protein mll3945 (249 aa).

The protein belongs to the TACO1 family.

The protein resides in the cytoplasm. This Mesorhizobium japonicum (strain LMG 29417 / CECT 9101 / MAFF 303099) (Mesorhizobium loti (strain MAFF 303099)) protein is Probable transcriptional regulatory protein mll3945.